The chain runs to 406 residues: Tryptophan synthase beta chain (406 aa).

Lys-99 carries the post-translational modification N6-(pyridoxal phosphate)lysine.

This sequence belongs to the TrpB family. Tetramer of two alpha and two beta chains. It depends on pyridoxal 5'-phosphate as a cofactor.

The enzyme catalyses (1S,2R)-1-C-(indol-3-yl)glycerol 3-phosphate + L-serine = D-glyceraldehyde 3-phosphate + L-tryptophan + H2O. It functions in the pathway amino-acid biosynthesis; L-tryptophan biosynthesis; L-tryptophan from chorismate: step 5/5. In terms of biological role, the beta subunit is responsible for the synthesis of L-tryptophan from indole and L-serine. This is Tryptophan synthase beta chain (trpB) from Caulobacter vibrioides (strain ATCC 19089 / CIP 103742 / CB 15) (Caulobacter crescentus).